The following is a 277-amino-acid chain: Phosphatidylglycerol--prolipoprotein diacylglyceryl transferase (277 aa).

Transmembrane regions (helical) follow at residues Leu-21–Ala-41, Leu-60–Tyr-80, Val-95–Trp-115, Phe-124–Leu-144, Ser-176–Ile-196, Gly-203–Val-223, and Met-239–Phe-259. Arg-143 is a binding site for a 1,2-diacyl-sn-glycero-3-phospho-(1'-sn-glycerol).

It belongs to the Lgt family.

Its subcellular location is the cell inner membrane. It carries out the reaction L-cysteinyl-[prolipoprotein] + a 1,2-diacyl-sn-glycero-3-phospho-(1'-sn-glycerol) = an S-1,2-diacyl-sn-glyceryl-L-cysteinyl-[prolipoprotein] + sn-glycerol 1-phosphate + H(+). Its pathway is protein modification; lipoprotein biosynthesis (diacylglyceryl transfer). Functionally, catalyzes the transfer of the diacylglyceryl group from phosphatidylglycerol to the sulfhydryl group of the N-terminal cysteine of a prolipoprotein, the first step in the formation of mature lipoproteins. The sequence is that of Phosphatidylglycerol--prolipoprotein diacylglyceryl transferase from Aliivibrio fischeri (strain ATCC 700601 / ES114) (Vibrio fischeri).